Reading from the N-terminus, the 214-residue chain is Single-pass membrane and coiled-coil domain-containing protein 1 (214 aa).

Positions 5–40 (TTTLISLKEAMKRVDNKLRALDTQFKELDVTKDNLT) form a coiled coil. A helical transmembrane segment spans residues 59 to 81 (IWTAALALGFTSMELNIVYSYVI). The tract at residues 193-214 (KQAQDPENSRAPLKELMPPVKD) is disordered.

It is found in the membrane. This chain is Single-pass membrane and coiled-coil domain-containing protein 1 (Smco1), found in Mus musculus (Mouse).